A 793-amino-acid chain; its full sequence is ClpA homolog protein (793 aa).

A disordered region spans residues 1-24; the sequence is MRPRSNAGSSPPDPEEQEHAQVPS. The Clp R domain occupies 22–168; the sequence is VPSFSSTLEQ…NFIAHGVAKD (147 aa). Repeat stretches follow at residues 25 to 88 and 103 to 168; these read FSST…IDDD and PTAA…VAKD. The tract at residues 169–194 is disordered; the sequence is PSYGESRPVQGADEPQETPKAEAGEA. Over residues 185–194 the composition is skewed to basic and acidic residues; that stretch reads ETPKAEAGEA. The tract at residues 199–447 is i; it reads LSKYCVDLNI…AQHLVSDSKR (249 aa). ATP-binding positions include 244–251 and 525–532; these read GDPGVGKT and GPTGVGKT. Residues 451 to 639 are II; the sequence is LGTKEIEAVV…ILIMTSNVGA (189 aa).

It belongs to the ClpA/ClpB family.

This chain is ClpA homolog protein, found in Fuscovulum blasticum (Rhodobacter blasticus).